Reading from the N-terminus, the 75-residue chain is Large ribosomal subunit protein bL31 (75 aa).

Zn(2+)-binding residues include cysteine 16, cysteine 18, cysteine 37, and cysteine 40.

The protein belongs to the bacterial ribosomal protein bL31 family. Type A subfamily. As to quaternary structure, part of the 50S ribosomal subunit. Requires Zn(2+) as cofactor.

Functionally, binds the 23S rRNA. This chain is Large ribosomal subunit protein bL31, found in Legionella pneumophila (strain Paris).